Consider the following 571-residue polypeptide: Septation ring formation regulator EzrA (571 aa).

The Extracellular segment spans residues Met1 to Tyr3. The chain crosses the membrane as a helical span at residues Met4 to Leu22. Over Lys23–Glu571 the chain is Cytoplasmic. Coiled-coil stretches lie at residues Leu248–Glu298, Asp326–Glu374, Lys400–Arg437, and Arg478–Phe529.

It belongs to the EzrA family.

The protein resides in the cell membrane. Functionally, negative regulator of FtsZ ring formation; modulates the frequency and position of FtsZ ring formation. Inhibits FtsZ ring formation at polar sites. Interacts either with FtsZ or with one of its binding partners to promote depolymerization. The polypeptide is Septation ring formation regulator EzrA (Listeria monocytogenes serotype 4b (strain CLIP80459)).